A 316-amino-acid chain; its full sequence is Probable cell division protein WhiA (316 aa).

A DNA-binding region (H-T-H motif) is located at residues Ser-276–Lys-309.

It belongs to the WhiA family.

In terms of biological role, involved in cell division and chromosome segregation. This Bifidobacterium longum subsp. infantis (strain ATCC 15697 / DSM 20088 / JCM 1222 / NCTC 11817 / S12) protein is Probable cell division protein WhiA.